A 139-amino-acid polypeptide reads, in one-letter code: ATP synthase epsilon chain (139 aa).

It belongs to the ATPase epsilon chain family. F-type ATPases have 2 components, CF(1) - the catalytic core - and CF(0) - the membrane proton channel. CF(1) has five subunits: alpha(3), beta(3), gamma(1), delta(1), epsilon(1). CF(0) has three main subunits: a, b and c.

The protein resides in the cell membrane. Functionally, produces ATP from ADP in the presence of a proton gradient across the membrane. The protein is ATP synthase epsilon chain of Roseiflexus sp. (strain RS-1).